A 440-amino-acid chain; its full sequence is N-succinylarginine dihydrolase (440 aa).

Substrate contacts are provided by residues 17–26 (GGLSPGNLAS), N108, and 135–136 (HR). The segment at 17-37 (GGLSPGNLASQSHVGEPSHPR) is disordered. E172 is an active-site residue. R210 serves as a coordination point for substrate. Residue H246 is part of the active site. Substrate contacts are provided by D248 and N358. C364 functions as the Nucleophile in the catalytic mechanism.

This sequence belongs to the succinylarginine dihydrolase family. Homodimer.

It carries out the reaction N(2)-succinyl-L-arginine + 2 H2O + 2 H(+) = N(2)-succinyl-L-ornithine + 2 NH4(+) + CO2. Its pathway is amino-acid degradation; L-arginine degradation via AST pathway; L-glutamate and succinate from L-arginine: step 2/5. Functionally, catalyzes the hydrolysis of N(2)-succinylarginine into N(2)-succinylornithine, ammonia and CO(2). This is N-succinylarginine dihydrolase from Myxococcus xanthus (strain DK1622).